A 669-amino-acid chain; its full sequence is Collagen alpha-1(II) chain (669 aa).

4-hydroxyproline is present on residues proline 3 and proline 12. Residues 318 to 327 are compositionally biased toward low complexity; it reads XXXXXXXGAP. 3 disordered regions span residues 318-360, 405-438, and 638-669; these read XXXX…XXXX and XXGF…AGPR. Residues proline 336 and proline 345 each carry the 4-hydroxyproline modification. 2 stretches are compositionally biased toward low complexity: residues 339-360 and 405-420; these read AGFA…XXXX and XXXX…NGNP. At proline 413 the chain carries 3-hydroxyproline. A 4-hydroxyproline mark is found at proline 414, proline 420, and proline 426. Composition is skewed to low complexity over residues 429–438 and 638–647; these read AGKXXXXXXX and XXGFTGLQGL. 4-hydroxyproline is present on proline 648. Proline 650 is subject to 3-hydroxyproline.

This sequence belongs to the fibrillar collagen family. In terms of assembly, homotrimers of alpha 1(II) chains. Contains mostly 4-hydroxyproline. Prolines at the third position of the tripeptide repeating unit (G-X-P) are 4-hydroxylated in some or all of the chains. Post-translationally, contains 3-hydroxyproline at a few sites. This modification occurs on the first proline residue in the sequence motif Gly-Pro-Hyp, where Hyp is 4-hydroxyproline.

It is found in the secreted. Its subcellular location is the extracellular space. The protein localises to the extracellular matrix. In terms of biological role, type II collagen is specific for cartilaginous tissues. It is essential for the normal embryonic development of the skeleton, for linear growth and for the ability of cartilage to resist compressive forces. The protein is Collagen alpha-1(II) chain of Mammut americanum (American mastodon).